We begin with the raw amino-acid sequence, 185 residues long: Ribosome-recycling factor (185 aa).

This sequence belongs to the RRF family.

Its subcellular location is the cytoplasm. In terms of biological role, responsible for the release of ribosomes from messenger RNA at the termination of protein biosynthesis. May increase the efficiency of translation by recycling ribosomes from one round of translation to another. The sequence is that of Ribosome-recycling factor from Thermomicrobium roseum (strain ATCC 27502 / DSM 5159 / P-2).